A 328-amino-acid polypeptide reads, in one-letter code: Methionyl-tRNA formyltransferase (328 aa).

110 to 113 contacts (6S)-5,6,7,8-tetrahydrofolate; that stretch reads SLLP.

This sequence belongs to the Fmt family.

The catalysed reaction is L-methionyl-tRNA(fMet) + (6R)-10-formyltetrahydrofolate = N-formyl-L-methionyl-tRNA(fMet) + (6S)-5,6,7,8-tetrahydrofolate + H(+). Its function is as follows. Attaches a formyl group to the free amino group of methionyl-tRNA(fMet). The formyl group appears to play a dual role in the initiator identity of N-formylmethionyl-tRNA by promoting its recognition by IF2 and preventing the misappropriation of this tRNA by the elongation apparatus. This is Methionyl-tRNA formyltransferase from Prochlorococcus marinus subsp. pastoris (strain CCMP1986 / NIES-2087 / MED4).